Reading from the N-terminus, the 465-residue chain is Cysteine--tRNA ligase (465 aa).

Residue Cys29 coordinates Zn(2+). The 'HIGH' region signature appears at 31-41 (PTVYNYIHIGN). Residues Cys209, His234, and Glu238 each contribute to the Zn(2+) site. The 'KMSKS' region motif lies at 266–270 (KMSKS). Lys269 contributes to the ATP binding site. A Phosphoserine modification is found at Ser270.

Belongs to the class-I aminoacyl-tRNA synthetase family. In terms of assembly, monomer. Zn(2+) is required as a cofactor.

The protein localises to the cytoplasm. The catalysed reaction is tRNA(Cys) + L-cysteine + ATP = L-cysteinyl-tRNA(Cys) + AMP + diphosphate. This chain is Cysteine--tRNA ligase, found in Bacillus cereus (strain AH187).